Here is a 378-residue protein sequence, read N- to C-terminus: MTENKSFKESHPLDDFISDKELSNTTIQKEKLTIEQQKQVDTISKQINPLDNEGLLAFGSDLQKQMSQFSHQMLDEVQSKDVGPIGDTLSDLMSKLKSVNPNELNTDKPSMLKRIFSRAKSSINEIFSRMQSVSAQVDRITIQLQKHQTHLTRDIELLDTLYDKNKQYFDDLSLHIIAAQQKKLQLENEKLPQLQQQAQQSTNQMDIQQVADMQQFIDRLDKRIYDLQLSRQIALQTAPQIRMIQNVNQALAEKIQSSILTSIPLWKNQMAIALTLMRQRNAVAAQRAVTDTTNDLLTANAEMLKQNAIETATENERGIVDLDTLKRTQRNIIETIEETLIIQQHGREERQLAEKELQQLEQDLKSHLVNIKGPNKQS.

This sequence belongs to the TelA family.

The sequence is that of TelA-like protein SAUSA300_1299 from Staphylococcus aureus (strain USA300).